Consider the following 368-residue polypeptide: 1-deoxy-D-xylulose 5-phosphate reductoisomerase (368 aa).

Residues Thr7, Gly8, Ser9, Ile10, Gly31, Lys32, Asn33, and Asn113 each contribute to the NADPH site. Lys114 is a binding site for 1-deoxy-D-xylulose 5-phosphate. Glu115 provides a ligand contact to NADPH. Asp133 serves as a coordination point for Mn(2+). Positions 134, 135, 158, and 181 each coordinate 1-deoxy-D-xylulose 5-phosphate. Residue Glu135 participates in Mn(2+) binding. Position 187 (Gly187) interacts with NADPH. The 1-deoxy-D-xylulose 5-phosphate site is built by Ser194, Asn199, Lys200, and Glu203. Residue Glu203 coordinates Mn(2+).

This sequence belongs to the DXR family. Requires Mg(2+) as cofactor. Mn(2+) serves as cofactor.

It carries out the reaction 2-C-methyl-D-erythritol 4-phosphate + NADP(+) = 1-deoxy-D-xylulose 5-phosphate + NADPH + H(+). Its pathway is isoprenoid biosynthesis; isopentenyl diphosphate biosynthesis via DXP pathway; isopentenyl diphosphate from 1-deoxy-D-xylulose 5-phosphate: step 1/6. Its function is as follows. Catalyzes the NADPH-dependent rearrangement and reduction of 1-deoxy-D-xylulose-5-phosphate (DXP) to 2-C-methyl-D-erythritol 4-phosphate (MEP). This Helicobacter pylori (strain ATCC 700392 / 26695) (Campylobacter pylori) protein is 1-deoxy-D-xylulose 5-phosphate reductoisomerase.